A 355-amino-acid chain; its full sequence is Uroporphyrinogen decarboxylase (355 aa).

Residues 36-40 (RQAGR), D85, Y160, S215, and H334 contribute to the substrate site.

The protein belongs to the uroporphyrinogen decarboxylase family. In terms of assembly, homodimer.

It is found in the cytoplasm. The enzyme catalyses uroporphyrinogen III + 4 H(+) = coproporphyrinogen III + 4 CO2. It functions in the pathway porphyrin-containing compound metabolism; protoporphyrin-IX biosynthesis; coproporphyrinogen-III from 5-aminolevulinate: step 4/4. Its function is as follows. Catalyzes the decarboxylation of four acetate groups of uroporphyrinogen-III to yield coproporphyrinogen-III. The sequence is that of Uroporphyrinogen decarboxylase from Rhodococcus erythropolis (strain PR4 / NBRC 100887).